The primary structure comprises 223 residues: Small ribosomal subunit protein uS3 (223 aa).

Residues 39–117 enclose the KH type-2 domain; that stretch reads IREHLRKKPS…RPELNAKLVA (79 aa).

The protein belongs to the universal ribosomal protein uS3 family. Part of the 30S ribosomal subunit. Forms a tight complex with proteins S10 and S14.

Functionally, binds the lower part of the 30S subunit head. Binds mRNA in the 70S ribosome, positioning it for translation. This chain is Small ribosomal subunit protein uS3, found in Chlamydia felis (strain Fe/C-56) (Chlamydophila felis).